The primary structure comprises 436 residues: GTPase Der (436 aa).

EngA-type G domains lie at 4 to 167 (PTVA…PVEE) and 175 to 351 (IRFS…ESQN). GTP is bound by residues 10–17 (GRPNVGKS), 57–61 (DTGGI), 119–122 (NKVD), 181–188 (GRPNVGKS), 229–233 (DTAGM), and 294–297 (NKWD). A KH-like domain is found at 352-436 (KRIPSAVLND…PIHLIARKRK (85 aa)).

This sequence belongs to the TRAFAC class TrmE-Era-EngA-EngB-Septin-like GTPase superfamily. EngA (Der) GTPase family. In terms of assembly, associates with the 50S ribosomal subunit.

Its function is as follows. GTPase that plays an essential role in the late steps of ribosome biogenesis. In Streptococcus pyogenes serotype M3 (strain ATCC BAA-595 / MGAS315), this protein is GTPase Der.